The sequence spans 299 residues: Probable alpha-L-glutamate ligase (299 aa).

In terms of domain architecture, ATP-grasp spans 111–293; the sequence is LQALAAANIA…VATQMIAYLE (183 aa). Residues Lys-147, 184–185, Asp-193, and 217–219 each bind ATP; these read DF and RAN. The Mg(2+) site is built by Asp-254, Glu-266, and Asn-268. Residues Asp-254, Glu-266, and Asn-268 each coordinate Mn(2+).

It belongs to the RimK family. Mg(2+) is required as a cofactor. The cofactor is Mn(2+).

This chain is Probable alpha-L-glutamate ligase, found in Mannheimia succiniciproducens (strain KCTC 0769BP / MBEL55E).